Reading from the N-terminus, the 272-residue chain is sn-1 stearoyl-lipid 9-desaturase (272 aa).

The next 2 membrane-spanning stretches (helical) occupy residues 11 to 31 (INWV…FAFI) and 39 to 59 (AVGV…TLGF). The Histidine box-1 motif lies at 60–65 (HRLVTH). Positions 97–101 (HRIHH) match the Histidine box-2 motif. Residues 160–180 (IALGLLLLYLGGWSFVVWGVF) traverse the membrane as a helical segment. Residues 230-234 (HHAFQ) carry the Histidine box-3 motif.

It belongs to the fatty acid desaturase type 2 family. It depends on Fe(2+) as a cofactor.

The protein localises to the membrane. It catalyses the reaction a 1-octadecanoyl 2-acyl-glycerolipid + 2 reduced [2Fe-2S]-[ferredoxin] + O2 + 2 H(+) = a 1-[(9Z)-octadecenoyl]-2-acyl-glycerolipid + 2 oxidized [2Fe-2S]-[ferredoxin] + 2 H2O. Its pathway is lipid metabolism; polyunsaturated fatty acid biosynthesis. Desaturase involved in fatty acid biosynthesis. Introduces a double bond at carbon 9 of stearoyl groups (18:0) attached to the sn-1 position of the glycerol moiety of membrane glycerolipids. Does not desaturate palmitic acid (16:0), palmitoleic acid (16:1) and cis-vaccenic acid (18:1). This is sn-1 stearoyl-lipid 9-desaturase from Anabaena variabilis.